An 84-amino-acid chain; its full sequence is Putative UPF0320 protein YNL337W (84 aa).

This sequence belongs to the UPF0320 family.

The sequence is that of Putative UPF0320 protein YNL337W from Saccharomyces cerevisiae (strain ATCC 204508 / S288c) (Baker's yeast).